A 282-amino-acid polypeptide reads, in one-letter code: Energy-coupling factor transporter ATP-binding protein EcfA1 (282 aa).

Positions 6 to 243 (ISFDHVTFTY…VEMLKRIGLD (238 aa)) constitute an ABC transporter domain. 40–47 (GHNGSGKS) lines the ATP pocket.

This sequence belongs to the ABC transporter superfamily. Energy-coupling factor EcfA family. As to quaternary structure, forms a stable energy-coupling factor (ECF) transporter complex composed of 2 membrane-embedded substrate-binding proteins (S component), 2 ATP-binding proteins (A component) and 2 transmembrane proteins (T component).

The protein resides in the cell membrane. Its function is as follows. ATP-binding (A) component of a common energy-coupling factor (ECF) ABC-transporter complex. Unlike classic ABC transporters this ECF transporter provides the energy necessary to transport a number of different substrates. In Lactobacillus delbrueckii subsp. bulgaricus (strain ATCC BAA-365 / Lb-18), this protein is Energy-coupling factor transporter ATP-binding protein EcfA1.